The following is a 626-amino-acid chain: uncharacterized protein (626 aa).

A helical membrane pass occupies residues 103-123; it reads AGALLVKFFPLLLLYPLTYLA. The Protein kinase domain maps to 200 to 618; it reads FENREPVGSG…DILEAARPFL (419 aa). ATP-binding positions include 206–214 and lysine 311; that span reads VGSGCVAQV. Aspartate 445 functions as the Proton acceptor in the catalytic mechanism.

The protein belongs to the protein kinase superfamily. ADCK protein kinase family.

The protein resides in the mitochondrion. It localises to the membrane. In terms of biological role, the function of this protein is not yet clear. It is not known if it has protein kinase activity and what type of substrate it would phosphorylate (Ser, Thr or Tyr). Involved in the mitochondrial import of CoQ precursors, plays a role in muscle mitochondrial function and fatty acid beta-oxidation. This is an uncharacterized protein from Homo sapiens (Human).